The following is a 287-amino-acid chain: ATP synthase gamma chain (287 aa).

The protein belongs to the ATPase gamma chain family. As to quaternary structure, F-type ATPases have 2 components, CF(1) - the catalytic core - and CF(0) - the membrane proton channel. CF(1) has five subunits: alpha(3), beta(3), gamma(1), delta(1), epsilon(1). CF(0) has three main subunits: a, b and c.

The protein localises to the cell inner membrane. In terms of biological role, produces ATP from ADP in the presence of a proton gradient across the membrane. The gamma chain is believed to be important in regulating ATPase activity and the flow of protons through the CF(0) complex. This is ATP synthase gamma chain from Xylella fastidiosa (strain M12).